An 86-amino-acid polypeptide reads, in one-letter code: Large ribosomal subunit protein bL35m (86 aa).

A mitochondrion-targeting transit peptide spans 1 to 18 (MLVVFQRVVRATVLVGRK). Residues 45 to 69 (RKHAGAQHLNRDTSSSTRARQRQWE) are disordered.

The protein belongs to the bacterial ribosomal protein bL35 family. As to quaternary structure, component of the mitochondrial large ribosomal subunit (mt-LSU). Mature yeast 74S mitochondrial ribosomes consist of a small (37S) and a large (54S) subunit. The 37S small subunit contains a 15S ribosomal RNA (15S mt-rRNA) and at least 32 different proteins. The 54S large subunit contains a 21S rRNA (21S mt-rRNA) and at least 45 different proteins.

It is found in the mitochondrion. In terms of biological role, component of the mitochondrial ribosome (mitoribosome), a dedicated translation machinery responsible for the synthesis of mitochondrial genome-encoded proteins, including at least some of the essential transmembrane subunits of the mitochondrial respiratory chain. The mitoribosomes are attached to the mitochondrial inner membrane and translation products are cotranslationally integrated into the membrane. This chain is Large ribosomal subunit protein bL35m (new15), found in Schizosaccharomyces pombe (strain 972 / ATCC 24843) (Fission yeast).